Reading from the N-terminus, the 123-residue chain is Large ribosomal subunit protein bL19 (123 aa).

This sequence belongs to the bacterial ribosomal protein bL19 family.

Functionally, this protein is located at the 30S-50S ribosomal subunit interface and may play a role in the structure and function of the aminoacyl-tRNA binding site. This chain is Large ribosomal subunit protein bL19, found in Bdellovibrio bacteriovorus (strain ATCC 15356 / DSM 50701 / NCIMB 9529 / HD100).